Consider the following 298-residue polypeptide: ADP-ribosylation factor GTPase-activating protein effector protein 2 (298 aa).

At Ser-2 the chain carries N-acetylserine. In terms of domain architecture, Arf-GAP spans 8-130 (KKALSALLRD…KWIGDLSSIE (123 aa)). The C4-type zinc finger occupies 23–47 (CADCKAQLHPRWASWSLGVFICIKC). A disordered region spans residues 137-180 (EPVLHKPSANHSLPASNARLDQSSNSLQKTQTQPPSHLLSTSRS). The span at 145 to 171 (ANHSLPASNARLDQSSNSLQKTQTQPP) shows a compositional bias: polar residues. 3 positions are modified to phosphoserine: Ser-180, Ser-183, and Ser-207.

The protein resides in the cytoplasm. It is found in the golgi apparatus. Its function is as follows. GTPase-activating protein for the ADP ribosylation factor family. In Saccharomyces cerevisiae (strain ATCC 204508 / S288c) (Baker's yeast), this protein is ADP-ribosylation factor GTPase-activating protein effector protein 2 (AGE2).